The sequence spans 669 residues: L-type lectin-domain containing receptor kinase V.9 (669 aa).

Residues 1–21 (MKFFVLVLLLVLQFFSNKALS) form the signal peptide. Residues 22-286 (QSEEGEFGFN…RDSRSTSVKK (265 aa)) lie on the Extracellular side of the membrane. Residues 38–259 (SGIAITNSKG…SHYILGWTFK (222 aa)) are legume-lectin like. N-linked (GlcNAc...) asparagine glycans are attached at residues Asn-53, Asn-75, Asn-124, Asn-206, and Asn-261. The helical transmembrane segment at 287–307 (ILAISLSLTSLAILVFLTISY) threads the bilayer. At 308–669 (MLFLKRKKLM…FTEPFVSHGR (362 aa)) the chain is on the cytoplasmic side. The Protein kinase domain occupies 344–603 (FRNSELLGKG…LGLFCSHPVA (260 aa)). Residues 350–358 (LGKGGFGKV) and Lys-373 each bind ATP. Asp-469 serves as the catalytic Proton acceptor.

In the C-terminal section; belongs to the protein kinase superfamily. Ser/Thr protein kinase family. The protein in the N-terminal section; belongs to the leguminous lectin family.

The protein localises to the cell membrane. The enzyme catalyses L-seryl-[protein] + ATP = O-phospho-L-seryl-[protein] + ADP + H(+). The catalysed reaction is L-threonyl-[protein] + ATP = O-phospho-L-threonyl-[protein] + ADP + H(+). The protein is L-type lectin-domain containing receptor kinase V.9 (LECRK59) of Arabidopsis thaliana (Mouse-ear cress).